Here is a 202-residue protein sequence, read N- to C-terminus: Protein G1-like4 (202 aa).

2 disordered regions span residues 1-44 (MDLS…RYEA) and 158-202 (RARG…GAAC). Over residues 12 to 22 (SGGGNGGGGGS) the composition is skewed to gly residues. Low complexity predominate over residues 23-36 (SSSNSSPSMGAGAP). The ALOG domain occupies 41-168 (RYEAQKRRDW…ARGVSYEKKK (128 aa)). The Nuclear localization signal signature appears at 166–170 (KKKRK). Over residues 173-186 (QQQQLQGGDSSGLH) the composition is skewed to low complexity. Over residues 192–202 (PPPPPPAGAAC) the composition is skewed to pro residues.

It belongs to the plant homeotic and developmental regulators ALOG protein family.

Its subcellular location is the nucleus. In terms of biological role, probable transcription regulator that acts as a developmental regulator by promoting cell growth in response to light. The chain is Protein G1-like4 from Oryza sativa subsp. indica (Rice).